The chain runs to 257 residues: Thiazole synthase (257 aa).

The active-site Schiff-base intermediate with DXP is Lys-96. Residues Gly-157, 184-185 (AG), and 206-207 (NT) each bind 1-deoxy-D-xylulose 5-phosphate.

This sequence belongs to the ThiG family. Homotetramer. Forms heterodimers with either ThiH or ThiS.

It is found in the cytoplasm. It catalyses the reaction [ThiS sulfur-carrier protein]-C-terminal-Gly-aminoethanethioate + 2-iminoacetate + 1-deoxy-D-xylulose 5-phosphate = [ThiS sulfur-carrier protein]-C-terminal Gly-Gly + 2-[(2R,5Z)-2-carboxy-4-methylthiazol-5(2H)-ylidene]ethyl phosphate + 2 H2O + H(+). It participates in cofactor biosynthesis; thiamine diphosphate biosynthesis. Its function is as follows. Catalyzes the rearrangement of 1-deoxy-D-xylulose 5-phosphate (DXP) to produce the thiazole phosphate moiety of thiamine. Sulfur is provided by the thiocarboxylate moiety of the carrier protein ThiS. In vitro, sulfur can be provided by H(2)S. The sequence is that of Thiazole synthase from Bartonella quintana (strain Toulouse) (Rochalimaea quintana).